A 523-amino-acid chain; its full sequence is MFS-type transporter R5 (523 aa).

A disordered region spans residues 19–42; it reads QLNEATAQRESATNNPNDSSSIDE. A compositionally biased stretch (polar residues) spans 21 to 38; the sequence is NEATAQRESATNNPNDSS. Asparagine 35, asparagine 94, and asparagine 143 each carry an N-linked (GlcNAc...) asparagine glycan. Transmembrane regions (helical) follow at residues 183-203 and 211-231; these read AYLT…GGLL and AIFW…FTFF. N-linked (GlcNAc...) asparagine glycans are attached at residues asparagine 235 and asparagine 250. 6 consecutive transmembrane segments (helical) span residues 291-311, 319-339, 381-401, 408-428, 443-463, and 470-490; these read FIVC…ISIF, YGYS…GSIL, LTIS…YGWL, VASV…VLIA, ALGA…VAAV, and IGIG…LPAL.

The protein belongs to the major facilitator superfamily.

It is found in the membrane. Its function is as follows. MFS-type transporter; part of the gene cluster that mediates the biosynthesis of squalestatin S1 (SQS1, also known as zaragozic acid A), a heavily oxidized fungal polyketide that offers potent cholesterol lowering activity by targeting squalene synthase (SS). In Phoma sp. (strain ATCC 20986 / MF5453), this protein is MFS-type transporter R5.